The sequence spans 136 residues: Small ribosomal subunit protein eS6 (136 aa).

The protein belongs to the eukaryotic ribosomal protein eS6 family.

The sequence is that of Small ribosomal subunit protein eS6 from Methanosarcina mazei (strain ATCC BAA-159 / DSM 3647 / Goe1 / Go1 / JCM 11833 / OCM 88) (Methanosarcina frisia).